A 124-amino-acid chain; its full sequence is Small ribosomal subunit protein uS12 (124 aa).

The disordered stretch occupies residues 8–30; it reads IRSARQDTEKQTKSPALKSCPQR. Position 89 is a 3-methylthioaspartic acid (D89). Residues 103-124 form a disordered region; sequence DTAGVKDRKQSRSKYGAKKPKA. Residues 113-124 show a composition bias toward basic residues; the sequence is SRSKYGAKKPKA.

Belongs to the universal ribosomal protein uS12 family. As to quaternary structure, part of the 30S ribosomal subunit. Contacts proteins S8 and S17. May interact with IF1 in the 30S initiation complex.

With S4 and S5 plays an important role in translational accuracy. Its function is as follows. Interacts with and stabilizes bases of the 16S rRNA that are involved in tRNA selection in the A site and with the mRNA backbone. Located at the interface of the 30S and 50S subunits, it traverses the body of the 30S subunit contacting proteins on the other side and probably holding the rRNA structure together. The combined cluster of proteins S8, S12 and S17 appears to hold together the shoulder and platform of the 30S subunit. In Trichodesmium erythraeum (strain IMS101), this protein is Small ribosomal subunit protein uS12.